Consider the following 350-residue polypeptide: MDINLFDFHLPEELIAQVPLEERETSRLMVLDRETGDIEHKHFTDILSYLHEGDCLVLNETKVMPARLHGVKEDTGAHIEVLLLKQEEGDKWETLVKPAKRVKEGTVISFGEGKLKATCTGTADQGGRQLEFSYDGIFYEILDELGEMPLPPYIKETLEDRDRYQTVYAKEIGSAAAPTAGLHFTEELLEKLKQKGVELAFITLHVGLGTFRPVSADTIEEHHMHAEYYHMSEETAALLNRVKENGGRIITVGTTSTRTLETIATDHDGKLCAASGWTDIFMYPGYEFKAIDGLITNFHLPKSTLIMLVSAFANRDNVLHAYNEAVKEKYRFFSFGDAMFVASHAKMGNK.

The protein belongs to the QueA family. As to quaternary structure, monomer.

The protein localises to the cytoplasm. It carries out the reaction 7-aminomethyl-7-carbaguanosine(34) in tRNA + S-adenosyl-L-methionine = epoxyqueuosine(34) in tRNA + adenine + L-methionine + 2 H(+). It functions in the pathway tRNA modification; tRNA-queuosine biosynthesis. Transfers and isomerizes the ribose moiety from AdoMet to the 7-aminomethyl group of 7-deazaguanine (preQ1-tRNA) to give epoxyqueuosine (oQ-tRNA). This chain is S-adenosylmethionine:tRNA ribosyltransferase-isomerase, found in Bacillus thuringiensis subsp. konkukian (strain 97-27).